Consider the following 633-residue polypeptide: DNA-directed RNA polymerase subunit beta' (633 aa).

Positions 72, 74, 87, and 90 each coordinate Zn(2+). Residues aspartate 468, aspartate 470, and aspartate 472 each coordinate Mg(2+).

It belongs to the RNA polymerase beta' chain family. RpoC1 subfamily. In plastids the minimal PEP RNA polymerase catalytic core is composed of four subunits: alpha, beta, beta', and beta''. When a (nuclear-encoded) sigma factor is associated with the core the holoenzyme is formed, which can initiate transcription. Mg(2+) is required as a cofactor. It depends on Zn(2+) as a cofactor.

It localises to the plastid. Its subcellular location is the chloroplast. It catalyses the reaction RNA(n) + a ribonucleoside 5'-triphosphate = RNA(n+1) + diphosphate. Its function is as follows. DNA-dependent RNA polymerase catalyzes the transcription of DNA into RNA using the four ribonucleoside triphosphates as substrates. The polypeptide is DNA-directed RNA polymerase subunit beta' (Cyanidium caldarium (Red alga)).